The sequence spans 458 residues: F-box/WD repeat-containing protein 9 (458 aa).

The residue at position 1 (Met-1) is an N-acetylmethionine. 2 disordered regions span residues 1–30 (MELP…DAQA) and 42–64 (KSGL…SASE). Positions 16–26 (DDSDPESETDP) are enriched in acidic residues. Ser-18 is modified (phosphoserine). Residue Thr-55 is modified to Phosphothreonine. Ser-59 is modified (phosphoserine). Positions 76 to 123 (EPGLLSLPPELLLEICSYLDARLVLHVLSRVCHALRDLVSDHVTWRLR) constitute an F-box domain. WD repeat units lie at residues 171–210 (GHVA…TESN), 220–261 (KRNS…QQFG), 264–301 (KASS…ALLK), 305–342 (LHSR…VLQR), 344–381 (QLDS…FQLI), 387–424 (GHSF…RTIC), and 427–458 (RHDN…RLQA).

As to quaternary structure, interacts with SKP1 and CUL1.

Its function is as follows. Substrate-recognition component of the SCF (SKP1-CUL1-F-box protein)-type E3 ubiquitin ligase complex. The chain is F-box/WD repeat-containing protein 9 (FBXW9) from Homo sapiens (Human).